The sequence spans 267 residues: Neuferricin (267 aa).

The signal sequence occupies residues 1-17 (MLKYLVALISMVLAVWT). One can recognise a Cytochrome b5 heme-binding domain in the interval 53–150 (LLTKEQLSLY…RDYTPVGKLI (98 aa)).

It belongs to the cytochrome b5 family. MAPR subfamily.

The protein localises to the secreted. In terms of biological role, heme-binding protein which promotes neuronal but not astrocyte differentiation. This chain is Neuferricin (cyb5d2), found in Danio rerio (Zebrafish).